The sequence spans 80 residues: CDC42 small effector protein 1 (80 aa).

S-palmitoyl cysteine attachment occurs at residues cysteine 10 and cysteine 11. In terms of domain architecture, CRIB spans 30–43; the sequence is IGEPMNFVHLTHIG. Residues 48-80 are disordered; the sequence is GAGDGLAMTGAVQEQMRSKGNHRDRPWSNSRAL.

Belongs to the CDC42SE/SPEC family. Interacts with CDC42 (in GTP-bound form). Interacts weakly with RAC1 and not at all with RHOA.

It is found in the cytoplasm. It localises to the cytoskeleton. The protein localises to the cell membrane. Its function is as follows. Probably involved in the organization of the actin cytoskeleton by acting downstream of CDC42, inducing actin filament assembly. Alters CDC42-induced cell shape changes. In activated T-cells, may play a role in CDC42-mediated F-actin accumulation at the immunological synapse. May play a role in early contractile events in phagocytosis in macrophages. The polypeptide is CDC42 small effector protein 1 (Cdc42se1) (Mus musculus (Mouse)).